The following is an 845-amino-acid chain: Envelope glycoprotein B (845 aa).

The signal sequence occupies residues M1–S26. At R27–P732 the chain is on the virion surface side. Residues D29 to P57 form a disordered region. Residues T33 to K49 are compositionally biased toward low complexity. 5 disulfide bridges follow: C68-C528, C85-C484, C157-C222, C315-C362, and C550-C587. Residues V124–E130 are involved in fusion and/or binding to host membrane. The N-linked (GlcNAc...) asparagine; by host glycan is linked to N179. The involved in fusion and/or binding to host membrane stretch occupies residues G208 to V216. N254, N275, N355, N368, N372, N385, and N408 each carry an N-linked (GlcNAc...) asparagine; by host glycan. The tract at residues H411–G451 is disordered. N-linked (GlcNAc...) asparagine; by host glycans are attached at residues N455, N562, N599, N614, and N628. The tract at residues L678 to K730 is hydrophobic membrane proximal region. Residues L733–S753 form a helical membrane-spanning segment. The Intravirion portion of the chain corresponds to R754–E845. The segment at R802–E845 is disordered. Over residues S811–G822 the composition is skewed to polar residues. The Internalization motif motif lies at Y830–L833.

Belongs to the herpesviridae glycoprotein B family. In terms of assembly, homotrimer; disulfide-linked. Binds to heparan sulfate proteoglycans. Interacts with gH/gL heterodimer. Interacts with host ITGAV-ITGB3; this interaction mediates viral entry. A proteolytic cleavage by host furin generates two subunits that remain linked by disulfide bonds.

It is found in the virion membrane. It localises to the host cell membrane. Its subcellular location is the host endosome membrane. The protein localises to the host Golgi apparatus membrane. Its function is as follows. Envelope glycoprotein that forms spikes at the surface of the virion envelope. Participates in viral entry through an RGD motif that binds ITGAV-ITGB3. Membrane fusion is mediated by the fusion machinery composed at least of gB and the heterodimer gH/gL. May be involved in the fusion between the virion envelope and the outer nuclear membrane during virion egress. This chain is Envelope glycoprotein B, found in Homo sapiens (Human).